Consider the following 468-residue polypeptide: F-box/LRR-repeat protein At4g14096 (468 aa).

One can recognise an F-box domain in the interval arginine 7 to proline 60. LRR repeat units follow at residues valine 114–serine 136, threonine 138–serine 167, tyrosine 169–aspartate 194, serine 216–aspartate 241, threonine 292–serine 323, and asparagine 324–glycine 349.

The protein is F-box/LRR-repeat protein At4g14096 of Arabidopsis thaliana (Mouse-ear cress).